A 227-amino-acid chain; its full sequence is Protein FAM3C (227 aa).

The signal sequence occupies residues 1–30; that stretch reads MMRAGGLLKLGVLVSVLFVAVFLAFELLES. Cystine bridges form between cysteine 58–cysteine 86 and cysteine 64–cysteine 221. In terms of domain architecture, GG-type lectin spans 67–225; sequence DHFAFKITSG…LEMEGCIPIK (159 aa).

The protein belongs to the FAM3 family.

The protein resides in the secreted. Its function is as follows. Involved in retinal laminar formation. The sequence is that of Protein FAM3C (fam3c) from Danio rerio (Zebrafish).